The chain runs to 385 residues: Ethanolamine kinase 2 (385 aa).

This sequence belongs to the choline/ethanolamine kinase family. Expressed in testis and liver. Low expression in ovary and kidney.

It carries out the reaction ethanolamine + ATP = phosphoethanolamine + ADP + H(+). Its pathway is phospholipid metabolism; phosphatidylethanolamine biosynthesis; phosphatidylethanolamine from ethanolamine: step 1/3. In terms of biological role, highly specific for ethanolamine phosphorylation. Does not have choline kinase activity. In Mus musculus (Mouse), this protein is Ethanolamine kinase 2 (Etnk2).